Consider the following 338-residue polypeptide: Lipoate-protein ligase A (338 aa).

One can recognise a BPL/LPL catalytic domain in the interval 29–216 (PATQRVLFLW…AFFAHYGEHV (188 aa)). Residues arginine 71, 76–79 (GAVF), and lysine 134 contribute to the ATP site. Lysine 134 contacts (R)-lipoate.

Belongs to the LplA family. In terms of assembly, monomer.

The protein localises to the cytoplasm. It carries out the reaction L-lysyl-[lipoyl-carrier protein] + (R)-lipoate + ATP = N(6)-[(R)-lipoyl]-L-lysyl-[lipoyl-carrier protein] + AMP + diphosphate + H(+). It functions in the pathway protein modification; protein lipoylation via exogenous pathway; protein N(6)-(lipoyl)lysine from lipoate: step 1/2. The protein operates within protein modification; protein lipoylation via exogenous pathway; protein N(6)-(lipoyl)lysine from lipoate: step 2/2. In terms of biological role, catalyzes both the ATP-dependent activation of exogenously supplied lipoate to lipoyl-AMP and the transfer of the activated lipoyl onto the lipoyl domains of lipoate-dependent enzymes. This chain is Lipoate-protein ligase A, found in Escherichia coli O17:K52:H18 (strain UMN026 / ExPEC).